The primary structure comprises 533 residues: Berberine bridge enzyme-like 28 (533 aa).

The signal sequence occupies residues 1 to 23 (MEFSSFLFTILLFSLNISPLVSA). Residues C34 and C96 are joined by a disulfide bond. The 176-residue stretch at 74–249 (ETPKPVSIIT…LSWKVKLVDV (176 aa)) folds into the FAD-binding PCMH-type domain. Pros-8alpha-FAD histidine is present on H111. N-linked (GlcNAc...) asparagine glycosylation is found at N142 and N440.

It belongs to the oxygen-dependent FAD-linked oxidoreductase family. FAD serves as cofactor.

It localises to the secreted. The protein localises to the cell wall. Its function is as follows. Involved in adaptation to salt stress. The sequence is that of Berberine bridge enzyme-like 28 from Arabidopsis thaliana (Mouse-ear cress).